The chain runs to 359 residues: Fructose-bisphosphate aldolase (359 aa).

At threonine 11 the chain carries Phosphothreonine. Residue lysine 27 forms a Glycyl lysine isopeptide (Lys-Gly) (interchain with G-Cter in ubiquitin) linkage. A phosphoserine mark is found at serine 56 and serine 63. Serine 63 is a D-glyceraldehyde 3-phosphate binding site. Lysine 73 is covalently cross-linked (Glycyl lysine isopeptide (Lys-Gly) (interchain with G-Cter in ubiquitin)). Residues serine 76 and serine 83 each carry the phosphoserine modification. A Glycyl lysine isopeptide (Lys-Gly) (interchain with G-Cter in ubiquitin) cross-link involves residue lysine 85. A Phosphoserine modification is found at serine 96. Aspartate 110 acts as the Proton donor in catalysis. Zn(2+)-binding residues include histidine 111 and aspartate 145. Serine 147 bears the Phosphoserine mark. The residue at position 150 (threonine 150) is a Phosphothreonine. Zn(2+) is bound at residue glutamate 175. Phosphothreonine is present on threonine 179. Residue histidine 227 participates in Zn(2+) binding. Glycine 228 contacts dihydroxyacetone phosphate. Residue histidine 265 participates in Zn(2+) binding. Dihydroxyacetone phosphate contacts are provided by residues 266-268 and 287-290; these read GGS and NLDT. At serine 268 the chain carries Phosphoserine. Threonine 290 carries the post-translational modification Phosphothreonine. A Glycyl lysine isopeptide (Lys-Gly) (interchain with G-Cter in ubiquitin) cross-link involves residue lysine 308. Phosphotyrosine is present on tyrosine 310. Serine 313 carries the phosphoserine modification.

This sequence belongs to the class II fructose-bisphosphate aldolase family. As to quaternary structure, homodimer. Zn(2+) serves as cofactor.

The enzyme catalyses beta-D-fructose 1,6-bisphosphate = D-glyceraldehyde 3-phosphate + dihydroxyacetone phosphate. Its pathway is carbohydrate degradation; glycolysis; D-glyceraldehyde 3-phosphate and glycerone phosphate from D-glucose: step 4/4. Catalyzes the aldol condensation of dihydroxyacetone phosphate (DHAP or glycerone-phosphate) with glyceraldehyde 3-phosphate (G3P) to form fructose 1,6-bisphosphate (FBP) in gluconeogenesis and the reverse reaction in glycolysis. This is Fructose-bisphosphate aldolase (FBA1) from Saccharomyces cerevisiae (strain ATCC 204508 / S288c) (Baker's yeast).